A 459-amino-acid chain; its full sequence is Disease resistance protein CHL1 (459 aa).

The 155-residue stretch at 16–170 (REVDVFLSFC…QIARDISLVV (155 aa)) folds into the TIR domain. E89 is a catalytic residue. The region spanning 191 to 401 (VYDLLALEVN…LLKLKAKQGG (211 aa)) is the NB-ARC domain. The span at 429-440 (ERKESSQDKSQQ) shows a compositional bias: basic and acidic residues. The tract at residues 429–459 (ERKESSQDKSQQESEVAADILIGKESSQDKQ) is disordered.

In terms of tissue distribution, mostly expressed in leaves, stems and roots, and, to a lower extent, in flowers and siliques.

It is found in the cytoplasm. The enzyme catalyses NAD(+) + H2O = ADP-D-ribose + nicotinamide + H(+). Functionally, confers resistance to low temperatures by limiting chloroplast damage and cell death, thus maintaining growth homeostasis. This chain is Disease resistance protein CHL1, found in Arabidopsis thaliana (Mouse-ear cress).